We begin with the raw amino-acid sequence, 192 residues long: MEVILLERISKLGQMGETVKVRDGFARNYLLPLGKALRANAANKARFESERATLEARNLERKSEAQKVADVLDGKSFIVVRSAGETGQLYGSVAARDVVEVLAAEGFNIGRNQVHLNTPIKAIGLHKVELQLHAEVEINIELNVARSAEEAERQAKGEELTSVDAIYGVDEDALRPEDFFDPEADGLDENEA.

Residues 173-192 form a disordered region; the sequence is ALRPEDFFDPEADGLDENEA. Over residues 179–192 the composition is skewed to acidic residues; that stretch reads FFDPEADGLDENEA.

The protein belongs to the bacterial ribosomal protein bL9 family.

In terms of biological role, binds to the 23S rRNA. The protein is Large ribosomal subunit protein bL9 of Rhizobium etli (strain ATCC 51251 / DSM 11541 / JCM 21823 / NBRC 15573 / CFN 42).